Here is a 529-residue protein sequence, read N- to C-terminus: Tyrosinase (529 aa).

The N-terminal stretch at 1 to 18 is a signal peptide; sequence MLLAVLYCLLWSFQTSAG. At 19–476 the chain is on the lumenal, melanosome side; it reads HFPRACVSSK…YLEQASRIWS (458 aa). Residues Asn86, Asn111, and Asn161 are each glycosylated (N-linked (GlcNAc...) asparagine). Cu cation is bound by residues His180, His202, and His211. Asn230 carries N-linked (GlcNAc...) asparagine glycosylation. Positions 287–313 are disordered; the sequence is SLCNGTPEGPLRRNPGNHDKSRTPRLP. Asn337 carries N-linked (GlcNAc...) asparagine glycosylation. His363 and His367 together coordinate Cu cation. Residue Asn371 is glycosylated (N-linked (GlcNAc...) asparagine). A Cu cation-binding site is contributed by His390. A helical membrane pass occupies residues 477 to 497; the sequence is WLLGAAMVGAVLTALLAGLVS. Over 498-529 the chain is Cytoplasmic; it reads LLCRHKRKQLPEEKQPLLMEKEDYHSLYQSHL.

It belongs to the tyrosinase family. As to quaternary structure, forms an OPN3-dependent complex with DCT in response to blue light in melanocytes. The cofactor is Cu(2+). Glycosylated.

The protein resides in the melanosome membrane. Its subcellular location is the melanosome. The enzyme catalyses 2 L-dopa + O2 = 2 L-dopaquinone + 2 H2O. The catalysed reaction is L-tyrosine + O2 = L-dopaquinone + H2O. It catalyses the reaction 2 5,6-dihydroxyindole-2-carboxylate + O2 = 2 indole-5,6-quinone-2-carboxylate + 2 H2O. Functionally, this is a copper-containing oxidase that functions in the formation of pigments such as melanins and other polyphenolic compounds. Catalyzes the initial and rate limiting step in the cascade of reactions leading to melanin production from tyrosine. In addition to hydroxylating tyrosine to DOPA (3,4-dihydroxyphenylalanine), also catalyzes the oxidation of DOPA to DOPA-quinone, and possibly the oxidation of DHI (5,6-dihydroxyindole) to indole-5,6 quinone. The chain is Tyrosinase from Homo sapiens (Human).